Reading from the N-terminus, the 358-residue chain is 3-isopropylmalate dehydrogenase (358 aa).

Residue 79 to 92 (GPKWEHLPPDEQPE) participates in NAD(+) binding. Substrate contacts are provided by R100, R110, R139, and D227. D227, D251, and D255 together coordinate Mg(2+). 285 to 297 (GSAPDIAGKGVAN) is a binding site for NAD(+).

Belongs to the isocitrate and isopropylmalate dehydrogenases family. LeuB type 1 subfamily. As to quaternary structure, homodimer. Mg(2+) is required as a cofactor. Requires Mn(2+) as cofactor.

It localises to the cytoplasm. The enzyme catalyses (2R,3S)-3-isopropylmalate + NAD(+) = 4-methyl-2-oxopentanoate + CO2 + NADH. It functions in the pathway amino-acid biosynthesis; L-leucine biosynthesis; L-leucine from 3-methyl-2-oxobutanoate: step 3/4. Catalyzes the oxidation of 3-carboxy-2-hydroxy-4-methylpentanoate (3-isopropylmalate) to 3-carboxy-4-methyl-2-oxopentanoate. The product decarboxylates to 4-methyl-2 oxopentanoate. This chain is 3-isopropylmalate dehydrogenase, found in Pseudoalteromonas translucida (strain TAC 125).